The chain runs to 486 residues: ATP synthase subunit beta (486 aa).

An ATP-binding site is contributed by 164 to 171 (GGAGVGKT).

It belongs to the ATPase alpha/beta chains family. F-type ATPases have 2 components, CF(1) - the catalytic core - and CF(0) - the membrane proton channel. CF(1) has five subunits: alpha(3), beta(3), gamma(1), delta(1), epsilon(1). CF(0) has four main subunits: a(1), b(1), b'(1) and c(9-12).

The protein localises to the cellular thylakoid membrane. The enzyme catalyses ATP + H2O + 4 H(+)(in) = ADP + phosphate + 5 H(+)(out). Its function is as follows. Produces ATP from ADP in the presence of a proton gradient across the membrane. The catalytic sites are hosted primarily by the beta subunits. The chain is ATP synthase subunit beta from Prochlorococcus marinus (strain MIT 9301).